The primary structure comprises 703 residues: Prolyl 3-hydroxylase 2 (703 aa).

The N-terminal stretch at 1-21 is a signal peptide; sequence MRESTWVSLLLLLLLPTPQRG. The interval 17–40 is disordered; that stretch reads TPQRGGPQDGRRSPEPEPERGPLQ. The span at 25–36 shows a compositional bias: basic and acidic residues; that stretch reads DGRRSPEPEPER. TPR repeat units follow at residues 42-75, 144-177, 205-238, and 301-334; these read FDLL…HRRL, RVPY…NPEH, HLES…YFNE, and PLHY…HPDN. N-linked (GlcNAc...) asparagine glycosylation is found at N444 and N544. One can recognise a Fe2OG dioxygenase domain in the interval 552 to 666; that stretch reads THMVCRTALS…RCAVALWFTL (115 aa). The Fe cation site is built by H575, D577, and H647. R657 is an active-site residue. The Prevents secretion from ER signature appears at 700-703; sequence KDEL.

The protein belongs to the leprecan family. Requires Fe cation as cofactor. It depends on L-ascorbate as a cofactor. In terms of tissue distribution, detected in kidney. Detected on kidney tubular cells, pancreas acinar cells, Schwann cells of the peripheral nerve in the pinna, and in tunica adventitia, the smooth muscle layer of the aortic wall (at protein level). Detected in lung, skeletal muscle and kidney. Detected in kidney glomeruli and in prehypertrophic regions of long bone from neonates. In the eye, detected in the epithelial layer of the cornea and at lower levels in the sclera at the posterior end of the eye.

It is found in the endoplasmic reticulum. The protein localises to the sarcoplasmic reticulum. The protein resides in the golgi apparatus. It carries out the reaction L-prolyl-[collagen] + 2-oxoglutarate + O2 = trans-3-hydroxy-L-prolyl-[collagen] + succinate + CO2. Its function is as follows. Prolyl 3-hydroxylase that catalyzes the post-translational formation of 3-hydroxyproline on collagens. Contributes to proline 3-hydroxylation of collagen COL4A1 and COL1A1 in tendons, the eye sclera and in the eye lens capsule. Has high activity with the type IV collagen COL4A1, and lower activity with COL1A1. Catalyzes hydroxylation of the first Pro in Gly-Pro-Hyp sequences where Hyp is 4-hydroxyproline. Has no activity on substrates that have proline instead of 4-hydroxyproline in the third position. This is Prolyl 3-hydroxylase 2 from Mus musculus (Mouse).